The following is a 571-amino-acid chain: Folylpolyglutamate synthase (571 aa).

Residue 122–125 (GKGS) coordinates ATP. Residues Ser146, Glu215, and His243 each coordinate Mg(2+). Positions 363 and 385 each coordinate ATP.

Belongs to the folylpolyglutamate synthase family. A monovalent cation serves as cofactor. As to expression, expressed in both shoots and roots, but expression in roots is higher compared with shoots. Distinct expression in the quiescent center (QC) region of the root tip. Also expressed in vascular tissues of the cotyledons and hypocotyls, and the first true leaves of 7 days old seedlings.

It is found in the plastid. It localises to the chloroplast. It carries out the reaction (6S)-5,6,7,8-tetrahydrofolyl-(gamma-L-Glu)(n) + L-glutamate + ATP = (6S)-5,6,7,8-tetrahydrofolyl-(gamma-L-Glu)(n+1) + ADP + phosphate + H(+). It participates in cofactor biosynthesis; tetrahydrofolylpolyglutamate biosynthesis. Catalyzes conversion of folates to polyglutamate derivatives allowing concentration of folate compounds in the cell and the intracellular retention of these cofactors, which are important substrates for most of the folate-dependent enzymes that are involved in one-carbon transfer reactions involved in purine, pyrimidine and amino acid synthesis. Essential for organellar and whole-plant folate homeostasis. Required for postembryonic root development. Generates polyglutamylated folate cofactors to support C1 metabolism required for meristem maintenance and cell expansion during postembryonic root development. The polypeptide is Folylpolyglutamate synthase (Arabidopsis thaliana (Mouse-ear cress)).